A 290-amino-acid chain; its full sequence is PIH1 domain-containing protein 1 (290 aa).

3 positions are modified to phosphoserine: Ser12, Ser16, and Ser173.

The protein belongs to the PIH1 family. Component of the R2TP complex composed at least of RUVBL1, RUVBL2, RPAP3 and PIHD1. Component of the PAQosome complex which is responsible for the biogenesis of several protein complexes and which consists of R2TP complex members RUVBL1, RUVBL2, RPAP3 and PIH1D1, URI complex members PFDN2, PFDN6, PDRG1, UXT and URI1 as well as ASDURF, POLR2E and DNAAF10/WDR92. Interacts with phosphorylated TELO2. Mediates interaction of TELO2 with the R2TP complex. Interacts with phosphorylated ECD, EFTUD2/SNRP116, RPB1 and UBR5 and with RPB1 in a phosphorylation-independent manner. Interacts with the core C/D box snoRNP particle components NOP58 and FBL and with RUVBL1/TIP49. Interacts with RPAP3 and DNAAF10. Interacts with histone H4 and with SWI/SNF complex member SMARCB1/SNF5. Interacts with the mTORC1 complex member RPTOR. Interacts with isoform 1 of MSL1.

It localises to the nucleus. Functionally, involved in the assembly of C/D box small nucleolar ribonucleoprotein (snoRNP) particles. Recruits the SWI/SNF complex to the core promoter of rRNA genes and enhances pre-rRNA transcription. Mediates interaction of TELO2 with the R2TP complex which is necessary for the stability of MTOR and SMG1. Positively regulates the assembly and activity of the mTORC1 complex. The chain is PIH1 domain-containing protein 1 (Pih1d1) from Mus musculus (Mouse).